The chain runs to 327 residues: Methionine import ATP-binding protein MetN (327 aa).

The 237-residue stretch at Val-3–Leu-239 folds into the ABC transporter domain. Residue Gly-36–Ser-43 participates in ATP binding.

It belongs to the ABC transporter superfamily. Methionine importer (TC 3.A.1.24) family. In terms of assembly, the complex is composed of two ATP-binding proteins (MetN), two transmembrane proteins (MetI) and a solute-binding protein (MetQ).

It localises to the cell inner membrane. It catalyses the reaction L-methionine(out) + ATP + H2O = L-methionine(in) + ADP + phosphate + H(+). It carries out the reaction D-methionine(out) + ATP + H2O = D-methionine(in) + ADP + phosphate + H(+). Part of the ABC transporter complex MetNIQ involved in methionine import. Responsible for energy coupling to the transport system. This is Methionine import ATP-binding protein MetN from Helicobacter pylori (strain HPAG1).